We begin with the raw amino-acid sequence, 44 residues long: Antifungal protein R (44 aa).

Belongs to the thaumatin family.

Its function is as follows. Has antifungal activity. Inhibits the growth of Trichoderma viridae and Candida albicans. The sequence is that of Antifungal protein R from Hordeum vulgare (Barley).